A 341-amino-acid chain; its full sequence is Phosphoribosylformylglycinamidine cyclo-ligase (341 aa).

The protein belongs to the AIR synthase family.

Its subcellular location is the cytoplasm. It catalyses the reaction 2-formamido-N(1)-(5-O-phospho-beta-D-ribosyl)acetamidine + ATP = 5-amino-1-(5-phospho-beta-D-ribosyl)imidazole + ADP + phosphate + H(+). It participates in purine metabolism; IMP biosynthesis via de novo pathway; 5-amino-1-(5-phospho-D-ribosyl)imidazole from N(2)-formyl-N(1)-(5-phospho-D-ribosyl)glycinamide: step 2/2. The chain is Phosphoribosylformylglycinamidine cyclo-ligase from Lachnoclostridium phytofermentans (strain ATCC 700394 / DSM 18823 / ISDg) (Clostridium phytofermentans).